The following is a 213-amino-acid chain: Probable nicotinate-nucleotide adenylyltransferase (213 aa).

Belongs to the NadD family.

The enzyme catalyses nicotinate beta-D-ribonucleotide + ATP + H(+) = deamido-NAD(+) + diphosphate. The protein operates within cofactor biosynthesis; NAD(+) biosynthesis; deamido-NAD(+) from nicotinate D-ribonucleotide: step 1/1. Functionally, catalyzes the reversible adenylation of nicotinate mononucleotide (NaMN) to nicotinic acid adenine dinucleotide (NaAD). This chain is Probable nicotinate-nucleotide adenylyltransferase, found in Shigella boydii serotype 18 (strain CDC 3083-94 / BS512).